The primary structure comprises 160 residues: Large ribosomal subunit protein uL22c (160 aa).

This sequence belongs to the universal ribosomal protein uL22 family. In terms of assembly, part of the 50S ribosomal subunit.

The protein localises to the plastid. The protein resides in the chloroplast. Functionally, this protein binds specifically to 23S rRNA. Its function is as follows. The globular domain of the protein is located near the polypeptide exit tunnel on the outside of the subunit, while an extended beta-hairpin is found that lines the wall of the exit tunnel in the center of the 70S ribosome. This Draba nemorosa (Woodland whitlowgrass) protein is Large ribosomal subunit protein uL22c (rpl22).